A 348-amino-acid chain; its full sequence is MDKTKALDAALTQIERAFGKGSIMRLGKSGAALEVETISTGSLGLDIALGIGGLPRGRVVEIFGPESSGKTTLALHTVAEAQKKGGVCAFIDAEHALDPLYARKLGVNLDDLLISQPDAGEQALEIADTLVRSGAIDVLVVDSVAALVPRAELEGEMGDSQPGMQARLMSQALRKLTASISRSNCMVIFINQIRMKIGVMYGSPETTTGGNALKFYASVRLDIRRIGAIKERDEVVGNQTRVKVVKNKLAPPFKQVEFDIMYGEGISKAGELIDLGVKAGVVDKSGSWFSHDSQRIGQGRENVKGFLKGHPDVAGRIEAAIRQNAGLIAERILGSSEDSEDGEDAAEA.

ATP is bound at residue 64 to 71 (GPESSGKT).

Belongs to the RecA family.

The protein resides in the cytoplasm. Its function is as follows. Can catalyze the hydrolysis of ATP in the presence of single-stranded DNA, the ATP-dependent uptake of single-stranded DNA by duplex DNA, and the ATP-dependent hybridization of homologous single-stranded DNAs. It interacts with LexA causing its activation and leading to its autocatalytic cleavage. In Blastochloris viridis (Rhodopseudomonas viridis), this protein is Protein RecA.